The chain runs to 1083 residues: Regulator of the glycerol channel 1 (1083 aa).

2 disordered regions span residues 1–46 (MSDY…GSSD) and 69–89 (LKNE…KENK). Residues 13–31 (GGISKQPATPGSTRSSSRN) are compositionally biased toward polar residues. Phosphoserine occurs at positions 136, 249, 252, 481, and 537. A PH domain is found at 495 to 606 (CIRVGYLLKK…DCSLKDSTDS (112 aa)). The segment at 534-582 (DSKSPRSKNKPVVEQSDISRVNKDGTNAGSHPSSKGTQDPKLTKRRKGL) is disordered. Residues 549–570 (SDISRVNKDGTNAGSHPSSKGT) show a composition bias toward polar residues. Serine 652, serine 765, and serine 813 each carry phosphoserine. Phosphothreonine occurs at positions 817 and 857. Residues serine 866, serine 879, serine 918, serine 966, serine 969, and serine 975 each carry the phosphoserine modification. The tract at residues 979–1083 (EENRTQNCSG…TVPATSASSK (105 aa)) is disordered. Composition is skewed to polar residues over residues 983 to 992 (TQNCSGSRKS), 1043 to 1061 (LKKT…VSND), and 1071 to 1083 (STNT…ASSK). Phosphoserine is present on residues serine 1059, serine 1081, and serine 1082.

The protein belongs to the RGC1 family.

Its subcellular location is the cytoplasm. Its function is as follows. Positive regulator of FPS1 glycerol channel required for the glycerol efflux. The sequence is that of Regulator of the glycerol channel 1 (RGC1) from Saccharomyces cerevisiae (strain ATCC 204508 / S288c) (Baker's yeast).